The following is a 264-amino-acid chain: Interleukin-33 (264 aa).

Residues Met1–Ala67 form a homeodomain-like HTH domain region. A propeptide spanning residues Met1–Phe101 is cleaved from the precursor. The interval Pro66–Leu108 is interaction with RELA.

The protein belongs to the IL-1 family. Highly divergent. In terms of assembly, forms a 1:1:1 heterotrimeric complex with its primary high-affinity receptor IL1RL1 and the coreceptor IL1RAP. Interacts with cargo receptor TMED10; the interaction mediates the translocation from the cytoplasm into the ERGIC (endoplasmic reticulum-Golgi intermediate compartment) and thereby secretion. The full-length protein can be released from cells and is able to signal via the IL1RL1/ST2 receptor. However, proteolytic processing by CELA1, CSTG/cathepsin G and ELANE/neutrophil elastase produces C-terminal peptides that are more active than the unprocessed full-length protein. May also be proteolytically processed by calpains. Proteolytic cleavage mediated by apoptotic caspases including CASP3 and CASP7 results in IL33 inactivation. In vitro proteolytic cleavage by CASP1 was reported but could not be confirmed in vivo suggesting that IL33 is probably not a direct substrate for that caspase.

It is found in the nucleus. Its subcellular location is the chromosome. It localises to the cytoplasm. The protein resides in the cytoplasmic vesicle. The protein localises to the secretory vesicle. It is found in the secreted. Cytokine that binds to and signals through the IL1RL1/ST2 receptor which in turn activates NF-kappa-B and MAPK signaling pathways in target cells. Involved in the maturation of Th2 cells inducing the secretion of T-helper type 2-associated cytokines. Also involved in activation of mast cells, basophils, eosinophils and natural killer cells. Acts as a chemoattractant for Th2 cells, and may function as an 'alarmin', that amplifies immune responses during tissue injury. Induces rapid UCP2-dependent mitochondrial rewiring that attenuates the generation of reactive oxygen species and preserves the integrity of Krebs cycle required for persistent production of itaconate and subsequent GATA3-dependent differentiation of inflammation-resolving alternatively activated macrophages. Functionally, in quiescent endothelia the uncleaved form is constitutively and abundantly expressed, and acts as a chromatin-associated nuclear factor with transcriptional repressor properties, it may sequester nuclear NF-kappaB/RELA, lowering expression of its targets. This form is rapidely lost upon angiogenic or pro-inflammatory activation. The polypeptide is Interleukin-33 (Rattus norvegicus (Rat)).